Reading from the N-terminus, the 357-residue chain is uncharacterized protein (357 aa).

Transmembrane regions (helical) follow at residues 13–33 (PVTGIYNILLFNLFPLATYLV), 44–64 (IACTLLCSITVILAYRMCAVY), 72–92 (VSTFGLAYGFLIMMSLRTCFL), 148–168 (VLTYKSLGIRTAVYVGAFCFV), 181–201 (LPISANPWYIQVAFCVTSGFF), 203–223 (YLFINALYYLFAIIFVPLGIW), 266–286 (IALTGSKFLASCSCFFLSALF), 293–313 (SISGRCSPAFFFQLLIQPFLI), and 327–347 (YWVLIIEMLINGTYGMGVVLL).

It localises to the mitochondrion membrane. This is an uncharacterized protein from Schizosaccharomyces pombe (strain 972 / ATCC 24843) (Fission yeast).